Here is a 373-residue protein sequence, read N- to C-terminus: MALNVAPVRDTKWLTLEVCRQFQRGTCSRSDEECKFAHPPKSCQVENGRVIACFDSLKGRCSRENCKYLHPPTHLKTQLEINGRNNLIQQKTAAAMLAQQMQFMFPGTPLHPVPTFPVGPAIGTNTAISFAPYLAPVTPGVGLVPTEILPTTPVIVPGSPPVTVPGSTATQKLLRTDKLEVCREFQRGNCARGETDCRFAHPADSTMIDTSDNTVTVCMDYIKGRCMREKCKYFHPPAHLQAKIKAAQHQANQAAVAAQAAAAAATVMAFPPGALHPLPKRQALEKSNGTSAVFNPSVLHYQQALTSAQLQQHAAFIPTGSVLCMTPATSIDNSEIISRNGMECQESALRITKHCYCTYYPVSSSIELPQTAC.

4 consecutive C3H1-type zinc fingers follow at residues 13–41 (WLTLEVCRQFQRGTCSRSDEECKFAHPPK), 47–73 (NGRVIACFDSLKGRCSRENCKYLHPPT), 176–204 (TDKLEVCREFQRGNCARGETDCRFAHPAD), and 212–238 (DNTVTVCMDYIKGRCMREKCKYFHPPA).

Belongs to the muscleblind family. In terms of assembly, interacts with ITGA3. Expressed in heart, brain, placenta, lung, liver, skeletal muscle, kidney and pancreas.

It is found in the nucleus. The protein localises to the cytoplasm. Mediates pre-mRNA alternative splicing regulation. Acts either as activator or repressor of splicing on specific pre-mRNA targets. Inhibits cardiac troponin-T (TNNT2) pre-mRNA exon inclusion but induces insulin receptor (IR) pre-mRNA exon inclusion in muscle. Antagonizes the alternative splicing activity pattern of CELF proteins. RNA-binding protein that binds to 5'ACACCC-3' core sequence, termed zipcode, within the 3'UTR of ITGA3. Binds to CUG triplet repeat expansion in myotonic dystrophy muscle cells by sequestering the target RNAs. Together with RNA binding proteins RBPMS and RBFOX2, activates vascular smooth muscle cells alternative splicing events. Regulates NCOR2 alternative splicing. Seems to regulate expression and localization of ITGA3 by transporting it from the nucleus to cytoplasm at adhesion plaques. May play a role in myotonic dystrophy pathophysiology (DM). This is Muscleblind-like protein 2 (MBNL2) from Homo sapiens (Human).